Here is a 294-residue protein sequence, read N- to C-terminus: UDP-N-acetylenolpyruvoylglucosamine reductase (294 aa).

Residues 26–189 (VGGQADVLFK…IEAEFKGVSS (164 aa)) enclose the FAD-binding PCMH-type domain. The active site involves Arg-169. Cys-218 serves as the catalytic Proton donor. The active site involves Glu-288.

The protein belongs to the MurB family. The cofactor is FAD.

It is found in the cytoplasm. It carries out the reaction UDP-N-acetyl-alpha-D-muramate + NADP(+) = UDP-N-acetyl-3-O-(1-carboxyvinyl)-alpha-D-glucosamine + NADPH + H(+). The protein operates within cell wall biogenesis; peptidoglycan biosynthesis. Its function is as follows. Cell wall formation. This chain is UDP-N-acetylenolpyruvoylglucosamine reductase, found in Wolbachia pipientis subsp. Culex pipiens (strain wPip).